We begin with the raw amino-acid sequence, 345 residues long: Anthranilate phosphoribosyltransferase (345 aa).

5-phospho-alpha-D-ribose 1-diphosphate is bound by residues glycine 84, 87–88, threonine 92, 94–97, 112–120, and serine 124; these read GD, NIST, and KHGNRSVSS. Glycine 84 provides a ligand contact to anthranilate. A Mg(2+)-binding site is contributed by serine 96. Anthranilate is bound at residue asparagine 115. Arginine 170 lines the anthranilate pocket. Residues aspartate 229 and glutamate 230 each coordinate Mg(2+).

Belongs to the anthranilate phosphoribosyltransferase family. Homodimer. The cofactor is Mg(2+).

The catalysed reaction is N-(5-phospho-beta-D-ribosyl)anthranilate + diphosphate = 5-phospho-alpha-D-ribose 1-diphosphate + anthranilate. It participates in amino-acid biosynthesis; L-tryptophan biosynthesis; L-tryptophan from chorismate: step 2/5. Catalyzes the transfer of the phosphoribosyl group of 5-phosphorylribose-1-pyrophosphate (PRPP) to anthranilate to yield N-(5'-phosphoribosyl)-anthranilate (PRA). In Xanthomonas oryzae pv. oryzae (strain MAFF 311018), this protein is Anthranilate phosphoribosyltransferase.